The chain runs to 289 residues: MNEKKERIIKTSIRLFAKKGFAATTIQEIASECGISKGAFYLHFKSKEALLLSACEYYIGMSMNKMKNIEEDLAGKPPKEVLKKQIGAQFEDFRDHKDFIVLLLTENIIPENQEIKQYFYKVTMETDKLYRNALLVSYGEGIERYVADLSIMARGIVHSYMNVMVFNGELNIDAEEISAFIIERLDDLVQGLSRSALNPIVSKDIFNPMPAGKDQLLEDIQKVKENSTLPEDITVSLDVIEEELTQDKPRKPIIKGMLSNLAGTNDKEVERLRALILSLSQFDHKKSSL.

In terms of domain architecture, HTH tetR-type spans 2 to 62; that stretch reads NEKKERIIKT…SACEYYIGMS (61 aa). Residues 25–44 constitute a DNA-binding region (H-T-H motif); the sequence is TIQEIASECGISKGAFYLHF.

This is an uncharacterized protein from Bacillus subtilis (strain 168).